Consider the following 132-residue polypeptide: Small ribosomal subunit protein uS8 (132 aa).

The protein belongs to the universal ribosomal protein uS8 family. In terms of assembly, part of the 30S ribosomal subunit. Contacts proteins S5 and S12.

Its function is as follows. One of the primary rRNA binding proteins, it binds directly to 16S rRNA central domain where it helps coordinate assembly of the platform of the 30S subunit. This chain is Small ribosomal subunit protein uS8, found in Agrobacterium fabrum (strain C58 / ATCC 33970) (Agrobacterium tumefaciens (strain C58)).